Reading from the N-terminus, the 113-residue chain is Na(+)/H(+) antiporter subunit C (113 aa).

The next 3 membrane-spanning stretches (helical) occupy residues 4 to 21, 28 to 47, and 67 to 89; these read LMAVLAGIIFMAATYLLL, VIIGTALLSHGVHLMLLTMG, and PLPQALILTAIVISFGVTSFILV.

This sequence belongs to the CPA3 antiporters (TC 2.A.63) subunit C family. As to quaternary structure, forms a heterooligomeric complex that consists of seven subunits: MrpA, MrpB, MrpC, MrpD, MrpE, MrpF and MrpG.

The protein resides in the cell membrane. Its function is as follows. Mrp complex is a Na(+)/H(+) antiporter that is considered to be the major Na(+) excretion system in B.subtilis. Has a major role in Na(+) resistance and a minor role in Na(+)- and K(+)-dependent pH homeostasis as compared to TetB. MrpA may be the actual Na(+)/H(+) antiporter, although the six other Mrp proteins are all required for Na(+)/H(+) antiport activity and Na(+) resistance. MrpA is required for initiation of sporulation when external Na(+) concentration increases. Also transports Li(+) but not K(+), Ca(2+) or Mg(2+). The sequence is that of Na(+)/H(+) antiporter subunit C (mrpC) from Bacillus subtilis (strain 168).